Reading from the N-terminus, the 341-residue chain is Protein arginine N-methyltransferase 1 (341 aa).

One can recognise an SAM-dependent MTase PRMT-type domain in the interval 20 to 315 (ADYYFDSYSH…DCAPFDKNQR (296 aa)). Residues histidine 33, arginine 42, glycine 66, aspartate 88, and glutamate 117 each contribute to the S-adenosyl-L-methionine site. Catalysis depends on residues glutamate 132 and glutamate 141.

Belongs to the class I-like SAM-binding methyltransferase superfamily. Protein arginine N-methyltransferase family.

The protein resides in the nucleus. Its subcellular location is the cytoplasm. It localises to the cytosol. The catalysed reaction is L-arginyl-[protein] + 2 S-adenosyl-L-methionine = N(omega),N(omega)-dimethyl-L-arginyl-[protein] + 2 S-adenosyl-L-homocysteine + 2 H(+). It catalyses the reaction L-arginyl-[protein] + S-adenosyl-L-methionine = N(omega)-methyl-L-arginyl-[protein] + S-adenosyl-L-homocysteine + H(+). Its function is as follows. Arginine methyltransferase that methylates the guanidino nitrogens of arginyl residues present in proteins such as ribonucleoproteins and histones. The sequence is that of Protein arginine N-methyltransferase 1 (prmt1) from Dictyostelium discoideum (Social amoeba).